The primary structure comprises 463 residues: Glutamate--tRNA ligase 1 (463 aa).

Positions 11–21 (PSPTGYLHIGG) match the 'HIGH' region motif. Residues 240–244 (KLSKR) carry the 'KMSKS' region motif. K243 contacts ATP.

Belongs to the class-I aminoacyl-tRNA synthetase family. Glutamate--tRNA ligase type 1 subfamily. As to quaternary structure, monomer.

The protein resides in the cytoplasm. It catalyses the reaction tRNA(Glu) + L-glutamate + ATP = L-glutamyl-tRNA(Glu) + AMP + diphosphate. Its function is as follows. Catalyzes the attachment of glutamate to tRNA(Glu) in a two-step reaction: glutamate is first activated by ATP to form Glu-AMP and then transferred to the acceptor end of tRNA(Glu). This chain is Glutamate--tRNA ligase 1, found in Campylobacter jejuni subsp. doylei (strain ATCC BAA-1458 / RM4099 / 269.97).